We begin with the raw amino-acid sequence, 506 residues long: Cationic amino acid transporter 8 (506 aa).

2 N-linked (GlcNAc...) asparagine glycosylation sites follow: Asn2 and Asn5. A helical transmembrane segment spans residues 38–58 (FYLLLIIIIYTATSACIYFDW). A glycan (N-linked (GlcNAc...) asparagine) is linked at Asn75. Helical transmembrane passes span 93–113 (NLYPMTLAIHFTMSVFCGFLY), 116–136 (IGPKFTAIIGQGFNILSWIFL), 147–167 (LIGFIFLGLGADTAFIPILTV), 174–194 (ISTFIMTVIGAAASLSYAVPA), and 211–231 (ICYGYIFIILIPCLLVATFLL). An N-linked (GlcNAc...) asparagine glycan is attached at Asn277. Residues 302–322 (ILLFFKVLLSYPSICIIVYFI) traverse the membrane as a helical segment. Asn325 and Asn342 each carry an N-linked (GlcNAc...) asparagine glycan. Transmembrane regions (helical) follow at residues 344-364 (SIINIINILMPISFIPCIIFG), 372-392 (AAIIIIIMNAFSALMHLTALI), 399-419 (LISAFLYMCAASIYTSQIYCF), and 427-447 (VVFGKLLGITSLFGGMFSLFC). N-linked (GlcNAc...) asparagine glycosylation is found at Asn453 and Asn456. Residues 466–486 (TISILLAISFIIMFLPLSILY) form a helical membrane-spanning segment.

It belongs to the SLC43A transporter (TC 2.A.1.44) family.

The protein localises to the cell membrane. Functionally, cationic amino acid transporter which transports L-arginine, L-lysine and, to a lesser extent, L-histidine and ornithine. Plays an essential role in gametogenesis. The sequence is that of Cationic amino acid transporter 8 from Plasmodium berghei (strain Anka).